A 528-amino-acid polypeptide reads, in one-letter code: Phosphoenolpyruvate carboxykinase (ATP) (528 aa).

3 residues coordinate substrate: arginine 56, tyrosine 192, and lysine 198. ATP-binding positions include lysine 198, histidine 217, and 233–241; that span reads GLSGTGKTT. Mn(2+) contacts are provided by lysine 198 and histidine 217. Aspartate 254 serves as a coordination point for Mn(2+). Residues glutamate 282, arginine 319, and threonine 444 each coordinate ATP. Arginine 319 serves as a coordination point for substrate.

The protein belongs to the phosphoenolpyruvate carboxykinase (ATP) family. The cofactor is Mn(2+).

The protein resides in the cytoplasm. The catalysed reaction is oxaloacetate + ATP = phosphoenolpyruvate + ADP + CO2. It functions in the pathway carbohydrate biosynthesis; gluconeogenesis. Functionally, involved in the gluconeogenesis. Catalyzes the conversion of oxaloacetate (OAA) to phosphoenolpyruvate (PEP) through direct phosphoryl transfer between the nucleoside triphosphate and OAA. The sequence is that of Phosphoenolpyruvate carboxykinase (ATP) from Bacillus pumilus (strain SAFR-032).